Reading from the N-terminus, the 715-residue chain is Poly(A) polymerase alpha-A (715 aa).

Residues 82–84, T91, 95–97, D149, K210, Y219, and 228–229 contribute to the ATP site; these read FGP, DID, and GV. 3 residues coordinate Mg(2+): D95, D97, and D149. A Nuclear localization signal 1 motif is present at residues 472 to 489; the sequence is RKQLHQLQPSHVSPKKKK. Disordered stretches follow at residues 510–543, 560–590, and 607–693; these read DSDN…PAAP, QNNS…TPKP, and KPVS…DLSD. 2 stretches are compositionally biased toward polar residues: residues 515-539 and 560-588; these read MSVP…QGNS and QNNS…SSTP. The short motif at 624-639 is the Nuclear localization signal 2 element; that stretch reads KRTSSPSNEDSPKKNK. Basic and acidic residues predominate over residues 655 to 673; the sequence is DQNKLETEELKEVHSEEKS. The span at 674–692 shows a compositional bias: polar residues; the sequence is SSPVPGSLPFSQQSSTDLS.

It belongs to the poly(A) polymerase family. Monomer. Requires Mg(2+) as cofactor. Mn(2+) is required as a cofactor.

The protein resides in the nucleus. It catalyses the reaction RNA(n) + ATP = RNA(n)-3'-adenine ribonucleotide + diphosphate. Polymerase that creates the 3'-poly(A) tail of mRNA's. May acquire specificity through interaction with a cleavage and polyadenylation factor (CPSF). The polypeptide is Poly(A) polymerase alpha-A (papola-a) (Xenopus laevis (African clawed frog)).